The following is a 126-amino-acid chain: Probable S-adenosyl-L-methionine-binding protein MJ1583 (126 aa).

The region spanning 4–126 (LKPIGVVEQN…FSEKLDCPKI (123 aa)) is the TsaA-like domain. Residues 45–46 (HK), R75, and 106–109 (YNET) contribute to the S-adenosyl-L-methionine site.

This sequence belongs to the tRNA methyltransferase O family.

The protein is Probable S-adenosyl-L-methionine-binding protein MJ1583 of Methanocaldococcus jannaschii (strain ATCC 43067 / DSM 2661 / JAL-1 / JCM 10045 / NBRC 100440) (Methanococcus jannaschii).